A 105-amino-acid polypeptide reads, in one-letter code: Dynein axonemal light chain 4 (105 aa).

This sequence belongs to the dynein light chain family. As to quaternary structure, consists of at least two heavy chains and a number of intermediate and light chains.

It is found in the cytoplasm. The protein localises to the cytoskeleton. The protein resides in the cilium axoneme. Its function is as follows. Force generating protein of respiratory cilia. Produces force towards the minus ends of microtubules. Dynein has ATPase activity. The protein is Dynein axonemal light chain 4 (Dnal4) of Mus musculus (Mouse).